Reading from the N-terminus, the 225-residue chain is UPF0758 protein Vapar_4033 (225 aa).

Residues 103–225 (VFDSPGTVKQ…SYSMAEKGLL (123 aa)) form the MPN domain. Positions 174, 176, and 187 each coordinate Zn(2+). A JAMM motif motif is present at residues 174-187 (HNHPSGSIEPSRAD).

This sequence belongs to the UPF0758 family.

This is UPF0758 protein Vapar_4033 from Variovorax paradoxus (strain S110).